Reading from the N-terminus, the 317-residue chain is METWQEVAVHVHRDAQEAVSHVLIETGSQGVAIADSADYIGQKDRFGELYPDVEQSDMIAITAYYPSSTNLADVIATINEQLAELASFGLQVGQVTVDSQELAEEDWADNWKKYYEPARITHDLTIVPSWTDYDASAGEKVIKLDPGMAFGTGTHPTTKMSLFALEQVLRGGETVIDVGTGSGVLSIASSLLGAKTIYAYDLDDVAVRVAQENIDLNQGTDNIHVAAGDLLKGVSQEADVIVANILADILVLLTDDAYRLVKKEGYLILSGIISEKLDMVLEAAFSAGFFLETHMVQGEWNALVFKKTDDISGVIGG.

4 residues coordinate S-adenosyl-L-methionine: Thr-158, Gly-179, Asp-201, and Asn-244.

It belongs to the methyltransferase superfamily. PrmA family.

It localises to the cytoplasm. The enzyme catalyses L-lysyl-[protein] + 3 S-adenosyl-L-methionine = N(6),N(6),N(6)-trimethyl-L-lysyl-[protein] + 3 S-adenosyl-L-homocysteine + 3 H(+). Functionally, methylates ribosomal protein L11. This chain is Ribosomal protein L11 methyltransferase, found in Streptococcus pyogenes serotype M49 (strain NZ131).